The chain runs to 159 residues: Neuroglobin (159 aa).

The Globin domain maps to 3–151 (KLSEKDKELI…VVAAMSQGWA (149 aa)). Heme b contacts are provided by His-66 and His-98.

This sequence belongs to the globin family. As to quaternary structure, monomer. Homodimers and homotetramers. Mainly monomeric but also detected as part of homodimers and homotetramers.

The protein resides in the cytoplasm. The protein localises to the cytosol. It is found in the mitochondrion matrix. The enzyme catalyses Fe(III)-heme b-[protein] + nitric oxide + H2O = Fe(II)-heme b-[protein] + nitrite + 2 H(+). Monomeric globin with a bis-histidyl six-coordinate heme-iron atom through which it can bind dioxygen, carbon monoxide and nitric oxide. Could help transport oxygen and increase its availability to the metabolically active neuronal tissues, though its low quantity in tissues as well as its high affinity for dioxygen, which may limit its oxygen-releasing ability, argue against it. The ferrous/deoxygenated form exhibits a nitrite reductase activity and it could produce nitric oxide which in turn inhibits cellular respiration in response to hypoxia. In its ferrous/deoxygenated state, it may also exhibit GDI (Guanine nucleotide Dissociation Inhibitor) activity toward heterotrimeric G-alpha proteins, thereby regulating signal transduction to facilitate neuroprotective responses in the wake of hypoxia and associated oxidative stress. The protein is Neuroglobin (ngb) of Chaenocephalus aceratus (Blackfin icefish).